The sequence spans 404 residues: Ammonium transporter (404 aa).

9 consecutive transmembrane segments (helical) span residues 7–27, 44–64, 96–116, 125–145, 158–178, 227–247, 254–274, 277–297, and 352–372; these read VFMFFCALLVWLMTPGLALFY, FSSIAIVSIVWVLFGYTLAFA, LFMMFQMTFAVLTTAIISGAF, FLLFSVLWASLVYTPVAHWVW, FAGGNVVHISSGVAGLVLAIV, INTNTAAAAGIAGWILVEWII, LGAVSGAIAGLVAITPAAGFV, FASIIIGIIGGAVCFWGVFSL, and IVAIAATYVFVFIVTFVIIKI.

It belongs to the ammonia transporter channel (TC 1.A.11.2) family. Interacts with NrgB for a correct localization of the latter. GlnK-AmtB complex interacts with TnrA.

It is found in the cell membrane. In terms of biological role, functions as an ammonium and methylammonium transporter in the absence of glutamine. Required for ammonium utilization at low concentrations or at low pH values, when ammonium is the single nitrogen source. Required for binding of NrgB to the membrane. Interaction between GlnK-AmtB complex and TnrA protects TnrA from proteolytic degradation. The polypeptide is Ammonium transporter (Bacillus subtilis (strain 168)).